Reading from the N-terminus, the 480-residue chain is Cysteine--tRNA ligase (480 aa).

Residue C29 coordinates Zn(2+). A 'HIGH' region motif is present at residues 31 to 41 (VTVYDHCHIGH). Zn(2+) contacts are provided by C209, H234, and E238. The 'KMSKS' region signature appears at 266-270 (KMSKS). An ATP-binding site is contributed by K269.

It belongs to the class-I aminoacyl-tRNA synthetase family. As to quaternary structure, monomer. The cofactor is Zn(2+).

The protein localises to the cytoplasm. It catalyses the reaction tRNA(Cys) + L-cysteine + ATP = L-cysteinyl-tRNA(Cys) + AMP + diphosphate. In Geobacter sp. (strain M21), this protein is Cysteine--tRNA ligase.